We begin with the raw amino-acid sequence, 2813 residues long: von Willebrand factor (2813 aa).

A signal peptide spans Met1 to Cys22. Residues Thr23–Arg763 constitute a propeptide that is removed on maturation. In terms of domain architecture, VWFD 1 spans Ala33 to Lys201. 2 cysteine pairs are disulfide-bonded: Cys35–Cys162 and Cys57–Cys200. N-linked (GlcNAc...) asparagine glycans are attached at residues Asn99, Asn156, and Asn211. The TIL 1 domain occupies Cys295 to Cys348. In terms of domain architecture, VWFD 2 spans Gly386 to Glu560. Cystine bridges form between Cys388-Cys524, Cys410-Cys559, and Cys432-Cys440. The short motif at Arg531–Asp533 is the Cell attachment site element. TIL domains are found at residues Cys652–Cys707 and Cys776–Cys827. N-linked (GlcNAc...) asparagine glycosylation occurs at Asn666. A Cell attachment site motif is present at residues Arg698–Asp700. An amino-terminal region spans residues Ser764–Glu787. 3 disulfide bridges follow: Cys767–Cys808, Cys776–Cys804, and Cys810–Cys821. The E1 stretch occupies residues Cys788 to Gly833. A CX region spans residues Arg826–Asp853. A glycan (N-linked (GlcNAc...) asparagine) is linked at Asn857. Residues Ala865–Ala1032 form the VWFD 3 domain. Cystine bridges form between Cys867-Cys996, Cys889-Cys1031, Cys898-Cys993, Cys914-Cys921, Cys1060-Cys1084, Cys1071-Cys1111, Cys1089-Cys1091, Cys1126-Cys1130, Cys1149-Cys1169, Cys1153-Cys1165, and Cys1196-Cys1199. One can recognise a TIL 4 domain in the interval Tyr1146–Cys1196. Asn1231 carries an N-linked (GlcNAc...) asparagine glycan. 2 disulfide bridges follow: Cys1234–Cys1237 and Cys1272–Cys1458. 2 consecutive VWFA domains span residues Asp1277–Ile1453 and Asp1498–Val1665. Asn1515 and Asn1574 each carry an N-linked (GlcNAc...) asparagine glycan. 8 disulfides stabilise this stretch: Cys1669–Cys1670, Cys1686–Cys1872, Cys1879–Cys1904, Cys1899–Cys1940, Cys1927–Cys2088, Cys1950–Cys2085, Cys1972–Cys2123, and Cys1993–Cys2001. In terms of domain architecture, VWFA 3 spans Asp1691–Leu1871. Residues Cys1948–Gln2124 enclose the VWFD 4 domain. The segment at Cys2216–Asp2261 is E2. Residues Asn2223, Asn2290, Asn2357, and Asn2400 are each glycosylated (N-linked (GlcNAc...) asparagine). Residues Thr2255–Asp2328 form the VWFC 1 domain. In terms of domain architecture, VWFC 2 spans Lys2429 to Leu2495. The Cell attachment site motif lies at Arg2507 to Asp2509. N-linked (GlcNAc...) asparagine glycans are attached at residues Asn2546 and Asn2585. The VWFC 3 domain maps to Glu2580–Leu2645. Cystine bridges form between Cys2724–Cys2774, Cys2739–Cys2788, Cys2750–Cys2804, and Cys2754–Cys2806. The 89-residue stretch at Cys2724 to Ser2812 folds into the CTCK domain. Residue Asn2790 is glycosylated (N-linked (GlcNAc...) asparagine).

In terms of assembly, multimeric. Interacts with F8. Post-translationally, all cysteine residues are involved in intrachain or interchain disulfide bonds. In terms of processing, N- and O-glycosylated. Plasma.

It localises to the secreted. It is found in the extracellular space. The protein localises to the extracellular matrix. Functionally, important in the maintenance of hemostasis, it promotes adhesion of platelets to the sites of vascular injury by forming a molecular bridge between sub-endothelial collagen matrix and platelet-surface receptor complex, glycoprotein Ibalpha/IX/V. Also acts as a chaperone for coagulation factor VIII, delivering it to the site of injury, stabilizing its heterodimeric structure and protecting it from premature clearance from plasma. This is von Willebrand factor (VWF) from Canis lupus familiaris (Dog).